Here is a 178-residue protein sequence, read N- to C-terminus: Large ribosomal subunit protein uL6 (178 aa).

Residues 159–178 (GKGIRYEGEHVRRKEGKTGK) form a disordered region.

Belongs to the universal ribosomal protein uL6 family. In terms of assembly, part of the 50S ribosomal subunit.

In terms of biological role, this protein binds to the 23S rRNA, and is important in its secondary structure. It is located near the subunit interface in the base of the L7/L12 stalk, and near the tRNA binding site of the peptidyltransferase center. The sequence is that of Large ribosomal subunit protein uL6 from Listeria monocytogenes serotype 4b (strain CLIP80459).